We begin with the raw amino-acid sequence, 686 residues long: Protein-glutamine gamma-glutamyltransferase 2 (686 aa).

Residue A2 is modified to N-acetylalanine. 2 disulfides stabilise this stretch: C230–C370 and C370–C371. Catalysis depends on residues C277, H335, and D358. N398, D400, E437, E447, and E452 together coordinate Ca(2+). Position 468 is an N6-acetyllysine (K468). Residue 476 to 483 (RIRVGDSM) coordinates GTP. Position 538 (E538) interacts with Ca(2+). GTP is bound at residue 579-582 (RDLY). Residue Q632 forms an Isoglutamyl lysine isopeptide (Gln-Lys) (interchain with K-?) linkage.

This sequence belongs to the transglutaminase superfamily. Transglutaminase family. Monomer. Interacts with phospholipase C; promoting alpha-1 adrenergic receptor signaling. Interacts with PLCD1. Ca(2+) is required as a cofactor. Post-translationally, disulfide bond formation inactivates the calcium-dependent acyltransferase activity. Cys-370 can form disulfide bonds with both Cys-230 and Cys-371: formation of a disulfide bond between Cys-230 and Cys-370 facilitates formation of the disulfide between Cys-370 and Cys-371, which promotes inactivation of the acyltransferase activity. May also form interchain disulfids between Cys-230 and Cys-370. Ca(2+) protects against disulfide bond formation and inactivation. Auto-transglutaminated: Forms covalent cross-links mediated by transglutaminase between Gln-632 and the epsilon-amino group of a lysine residue of itself or HMGB1, forming homopolymers and heteropolymers, respectively. In terms of processing, S-nitrosylated, leading to inactivation of the acyltransferase activity.

The protein resides in the cytoplasm. It localises to the cytosol. The protein localises to the nucleus. It is found in the chromosome. Its subcellular location is the secreted. The protein resides in the extracellular space. It localises to the extracellular matrix. The protein localises to the cell membrane. It is found in the mitochondrion. The catalysed reaction is L-glutaminyl-[protein] + L-lysyl-[protein] = [protein]-L-lysyl-N(6)-5-L-glutamyl-[protein] + NH4(+). It carries out the reaction L-glutaminyl-[protein] + serotonin = 5-serotonyl-L-glutamyl-[protein] + NH4(+). It catalyses the reaction L-glutaminyl-[protein] + dopamine = 5-dopaminyl-L-glutamyl-[protein] + NH4(+). The enzyme catalyses L-glutaminyl-[protein] + histamine = 5-histaminyl-L-glutamyl-[protein] + NH4(+). The catalysed reaction is L-glutaminyl-[protein] + (R)-noradrenaline = 5-(R)-noradrenalinyl-L-glutamyl-[protein] + NH4(+). It carries out the reaction L-glutaminyl-[protein] + H2O = L-glutamyl-[protein] + NH4(+). Acyltransferase activity is regulated by the binding of GTP and Ca(2+): inactivated by GTP, which stabilizes its closed structure, thereby obstructing the accessibility of substrates to the active sites. In contrast, Ca(2+) acts as a cofactor by inducing conformational change to the active open form. In absence of Ca(2+), Mg(2+) may bind Ca(2+)-binding sites, promoting GTP-binding and subsequent inhibition of the acyltransferase activity. Extracellularly reduced and activated by CLIC3. Its function is as follows. Calcium-dependent acyltransferase that catalyzes the formation of covalent bonds between peptide-bound glutamine and various primary amines, such as gamma-amino group of peptide-bound lysine, or mono- and polyamines, thereby producing cross-linked or aminated proteins, respectively. Involved in many biological processes, such as bone development, angiogenesis, wound healing, cellular differentiation, chromatin modification and apoptosis. Acts as a protein-glutamine gamma-glutamyltransferase by mediating the cross-linking of proteins, such as ACO2, HSPB6, FN1, HMGB1, RAP1GDS1, SLC25A4/ANT1, SPP1 and WDR54. Under physiological conditions, the protein cross-linking activity is inhibited by GTP; inhibition is relieved by Ca(2+) in response to various stresses. When secreted, catalyzes cross-linking of proteins of the extracellular matrix, such as FN1 and SPP1 resulting in the formation of scaffolds. Plays a key role during apoptosis, both by (1) promoting the cross-linking of cytoskeletal proteins resulting in condensation of the cytoplasm, and by (2) mediating cross-linking proteins of the extracellular matrix, resulting in the irreversible formation of scaffolds that stabilize the integrity of the dying cells before their clearance by phagocytosis, thereby preventing the leakage of harmful intracellular components. In addition to protein cross-linking, can use different monoamine substrates to catalyze a vast array of protein post-translational modifications: mediates aminylation of serotonin, dopamine, noradrenaline or histamine into glutamine residues of target proteins to generate protein serotonylation, dopaminylation, noradrenalinylation or histaminylation, respectively. Mediates protein serotonylation of small GTPases during activation and aggregation of platelets, leading to constitutive activation of these GTPases. Plays a key role in chromatin organization by mediating serotonylation and dopaminylation of histone H3. Catalyzes serotonylation of 'Gln-5' of histone H3 (H3Q5ser) during serotonergic neuron differentiation, thereby facilitating transcription. Acts as a mediator of neurotransmission-independent role of nuclear dopamine in ventral tegmental area (VTA) neurons: catalyzes dopaminylation of 'Gln-5' of histone H3 (H3Q5dop), thereby regulating relapse-related transcriptional plasticity in the reward system. Regulates vein remodeling by mediating serotonylation and subsequent inactivation of ATP2A2/SERCA2. Also acts as a protein deamidase by mediating the side chain deamidation of specific glutamine residues of proteins to glutamate. Catalyzes specific deamidation of protein gliadin, a component of wheat gluten in the diet. May also act as an isopeptidase cleaving the previously formed cross-links. Also able to participate in signaling pathways independently of its acyltransferase activity: acts as a signal transducer in alpha-1 adrenergic receptor-mediated stimulation of phospholipase C-delta (PLCD) activity and is required for coupling alpha-1 adrenergic agonists to the stimulation of phosphoinositide lipid metabolism. The chain is Protein-glutamine gamma-glutamyltransferase 2 from Mus musculus (Mouse).